Consider the following 110-residue polypeptide: Carboxysome shell protein CsoS1B (110 aa).

The 86-residue stretch at 8–93 (ALGMIETRGL…VHSEVEIILP (86 aa)) folds into the BMC domain.

Belongs to the bacterial microcompartments protein family. CsoS1 subfamily. In terms of assembly, homohexamer with a small central pore. Interacts with the N-terminus (residues 1-136) of RuBisCO (CbbL).

It localises to the carboxysome. Functionally, one of shell proteins of the carboxysome, a polyhedral inclusion where RuBisCO (ribulose bisphosphate carboxylase, ccbL-ccbS) is sequestered. Assembles into hexamers which make sheets that form the facets of the polyhedral carboxysome. The shell probably limits the diffusion of CO(2) into and out of the carboxysome. There are estimated to be 540 CsoS1B proteins per carboxysome. Its function is as follows. Unlike beta-carboxysomes, alpha-carboxysomes (Cb) can form without cargo protein. CsoS2 is essential for Cb formation and is also capable of targeting foreign proteins to the Cb. The Cb shell assembles with the aid of CsoS2; CsoS1A, CsoS1B and CsoS1C form the majority of the shell while CsoS4A and CsoS4B form vertices. CsoS1D forms pseudohexamers that probably control metabolite flux into and out of the shell. This is Carboxysome shell protein CsoS1B from Halothiobacillus neapolitanus (strain ATCC 23641 / c2) (Thiobacillus neapolitanus).